The following is a 628-amino-acid chain: MALSFSRDRSRALPLAAEIGALGVVFGDIGTSPLYALKQGVLAVGGTDFTSADVMGLLSLITWSIILSVTVKYVMLVLRADNDGEGGILALVTLLDLHRSAIGLRWYLLAAGLVGAAMLIGDGVLTPAMSVLSAIEGLQVISPALLDWIVPLTVLVLAAVFLSQRLGTERIASFYGPIMVLWFGSLAVLGVYGIMQAPEVLAGLDPRAGFHTVTTHPGLAGVIIGACFLAITGGEALYADLGHFGRKTIARAWLFVAMPALLLNYFGQGAILLRDPQAVRNPFYDLCPDLFDIPLLFLATAATVIASQSIITGVFSLAKQAIELGYLPPMRIRYTSEHNEQHIYVGRLNWLLMVACIAVVLGFEASDRLASAYGIAVAFAMVTTSILFVAQVNRAWKWPKPAVIALGIGLFSLDAAFASANLTKLHEGGWLPLTIAGIVIFVMVSWRRGLEGVVAQQQRFTEPLDEFVLRGDRASDAESPRTAIFLSRAGAMTPVALSRMADLLKVRFQRAVIVSVWIAARPRVSVDDRVRVTNLDGGFIRVDLRFGYMQQIDVPSVLGPALSARGVDPDEAIYVIGHERIIPPDEVVRGRDVVAHVFAFLARNAERSVDRFGLPRSRTVEIGYPVKL.

A run of 12 helical transmembrane segments spans residues 12–32 (ALPLAAEIGALGVVFGDIGTS), 57–77 (LLSLITWSIILSVTVKYVMLV), 106–126 (WYLLAAGLVGAAMLIGDGVLT), 141–161 (ISPALLDWIVPLTVLVLAAVF), 174–194 (FYGPIMVLWFGSLAVLGVYGI), 219–239 (LAGVIIGACFLAITGGEALYA), 253–273 (WLFVAMPALLLNYFGQGAILL), 295–315 (LLFLATAATVIASQSIITGVF), 343–363 (IYVGRLNWLLMVACIAVVLGF), 369–389 (LASAYGIAVAFAMVTTSILFV), 402–422 (AVIALGIGLFSLDAAFASANL), and 425–445 (LHEGGWLPLTIAGIVIFVMVS).

This sequence belongs to the HAK/KUP transporter (TC 2.A.72) family.

It localises to the cell inner membrane. It carries out the reaction K(+)(in) + H(+)(in) = K(+)(out) + H(+)(out). Transport of potassium into the cell. Likely operates as a K(+):H(+) symporter. This Azorhizobium caulinodans (strain ATCC 43989 / DSM 5975 / JCM 20966 / LMG 6465 / NBRC 14845 / NCIMB 13405 / ORS 571) protein is Probable potassium transport system protein Kup.